Consider the following 280-residue polypeptide: Protein IMPACT homolog (280 aa).

The 101-residue stretch at 9 to 109 (DELLALESIY…QAAAERESKL (101 aa)) folds into the RWD domain.

It belongs to the IMPACT family. In terms of assembly, interacts (via N-terminus) with gcn1 (via C-terminus); this interaction reduces the gcn1-gcn20 complex formation and prevents the interaction of gcn1 with gcn2 protein kinase and gcn2 activation in amino acid-starved cells. Interacts (via C-terminus) with act1; this interaction occurs in a gcn1-independent manner. Interacts with rpl39; this interaction occurs in a gcn1-independent manner. Associates (via middle region) with ribosomes; this association occurs in a gcn1-independent manner and persists under amino acid starvation conditions.

The protein resides in the cytoplasm. Its subcellular location is the nucleus. Its function is as follows. Translational regulator that ensures constant high levels of translation under amino acid starvation. Plays a role as a negative regulator of the gcn2 kinase activity; impairs gcn1-mediated gcn2 activation, and hence gcn2-mediated eIF-2-alpha phosphorylation in amino acid-starved cells and subsequent down-regulation of protein synthesis. In normal conditions, it resides in a actin complex and has no activity. This chain is Protein IMPACT homolog (yih1), found in Schizosaccharomyces pombe (strain 972 / ATCC 24843) (Fission yeast).